The chain runs to 67 residues: Stomoxyn (67 aa).

Positions 1–24 (MNFYKYLVVLVVLVLCLSATQTEA) are cleaved as a signal peptide. Thr-66 carries the threonine amide modification.

In terms of tissue distribution, constitutively expressed in the adult anterior midgut; proventriculus, thoracic and reservoir regions.

It localises to the secreted. Functionally, has antimicrobial activity against most Gram-positive and Gram-negative bacteria, filamentous fungi and yeasts tested. Has trypanolytic effect on T.b.rhodesiense and limited hemolytic activity against bovine red blood cells. Its function is as follows. May play an important role in protecting the stored blood in the anterior midgut from microorganisms prior to digestion. Adopts an amphipathic alpha-helical structure only in the presence of an organic solvent that mimics a phospholipid membrane. The protein is Stomoxyn of Stomoxys calcitrans (Stable fly).